A 264-amino-acid polypeptide reads, in one-letter code: H-2 class II histocompatibility antigen, E-B beta chain (264 aa).

Residues 1 to 26 form the signal peptide; the sequence is MVWLPRVPCVAAVILLLTVLSPPMAL. A beta-1 region spans residues 27–121; that stretch reads VRDSRPWFLE…ISDKFLVRRR (95 aa). Topologically, residues 27–225 are extracellular; sequence VRDSRPWFLE…KAQSTSAQNK (199 aa). 2 disulfides stabilise this stretch: cysteine 38-cysteine 106 and cysteine 144-cysteine 200. Residue asparagine 46 is glycosylated (N-linked (GlcNAc...) asparagine). Residues 122-225 form a beta-2 region; it reads VEPTVTVYPT…KAQSTSAQNK (104 aa). Residues 124–214 enclose the Ig-like C1-type domain; it reads PTVTVYPTKT…PSLTDPVTVE (91 aa). A helical transmembrane segment spans residues 226-246; that stretch reads MLSGVGGFVLGLLFLGAGLFI. The Cytoplasmic portion of the chain corresponds to 247-264; sequence YFRNQKGQSGLQPTGLLS.

Belongs to the MHC class II family. Post-translationally, ubiquitinated in immature dendritic cells leading to down-regulation of MHC class II.

The protein resides in the membrane. In Mus musculus (Mouse), this protein is H-2 class II histocompatibility antigen, E-B beta chain (H2-Eb1).